The chain runs to 475 residues: Aspartyl/glutamyl-tRNA(Asn/Gln) amidotransferase subunit B (475 aa).

The protein belongs to the GatB/GatE family. GatB subfamily. As to quaternary structure, heterotrimer of A, B and C subunits.

The catalysed reaction is L-glutamyl-tRNA(Gln) + L-glutamine + ATP + H2O = L-glutaminyl-tRNA(Gln) + L-glutamate + ADP + phosphate + H(+). It catalyses the reaction L-aspartyl-tRNA(Asn) + L-glutamine + ATP + H2O = L-asparaginyl-tRNA(Asn) + L-glutamate + ADP + phosphate + 2 H(+). Allows the formation of correctly charged Asn-tRNA(Asn) or Gln-tRNA(Gln) through the transamidation of misacylated Asp-tRNA(Asn) or Glu-tRNA(Gln) in organisms which lack either or both of asparaginyl-tRNA or glutaminyl-tRNA synthetases. The reaction takes place in the presence of glutamine and ATP through an activated phospho-Asp-tRNA(Asn) or phospho-Glu-tRNA(Gln). The polypeptide is Aspartyl/glutamyl-tRNA(Asn/Gln) amidotransferase subunit B (Staphylococcus aureus (strain bovine RF122 / ET3-1)).